A 478-amino-acid polypeptide reads, in one-letter code: UDP-N-acetylmuramate--L-alanine ligase (478 aa).

122 to 128 is a binding site for ATP; sequence GTHGKTT.

This sequence belongs to the MurCDEF family.

Its subcellular location is the cytoplasm. The enzyme catalyses UDP-N-acetyl-alpha-D-muramate + L-alanine + ATP = UDP-N-acetyl-alpha-D-muramoyl-L-alanine + ADP + phosphate + H(+). Its pathway is cell wall biogenesis; peptidoglycan biosynthesis. Its function is as follows. Cell wall formation. This is UDP-N-acetylmuramate--L-alanine ligase from Stenotrophomonas maltophilia (strain K279a).